The sequence spans 353 residues: Rhodopsin (353 aa).

The Extracellular portion of the chain corresponds to 1–36; sequence MNGTEGPYFYIPMVNTTGIVRSPYEYPQYYLVNPAA. Residues N2 and N15 are each glycosylated (N-linked (GlcNAc...) asparagine). The helical transmembrane segment at 37–61 threads the bilayer; that stretch reads YAALGAYMFLLILVGFPVNFLTLYV. Topologically, residues 62 to 73 are cytoplasmic; that stretch reads TLEHKKLRTPLN. Residues 74 to 96 form a helical membrane-spanning segment; that stretch reads YILLNLAVADLFMVLGGFTTTMY. At 97–110 the chain is on the extracellular side; it reads TSMHGYFVLGRLGC. C110 and C187 are oxidised to a cystine. The helical transmembrane segment at 111-133 threads the bilayer; that stretch reads NVEGFFATLGGEIALWSLVVLAI. Positions 134 to 136 match the 'Ionic lock' involved in activated form stabilization motif; it reads ERW. At 134 to 152 the chain is on the cytoplasmic side; it reads ERWVVVCKPISNFRFSEDH. The chain crosses the membrane as a helical span at residues 153–173; sequence AIMGLAFTWVMASACAVPPLV. Topologically, residues 174–202 are extracellular; that stretch reads GWSRYIPEGMQCSCGIDYYTRAEGFNNES. N-linked (GlcNAc...) asparagine glycosylation is present at N200. Residues 203–224 traverse the membrane as a helical segment; the sequence is FVIYMFVCHFLIPLVVVFFCYG. Over 225–252 the chain is Cytoplasmic; sequence RLLCAVKEAAAAQQESETTQRAEREVSR. Residues 253–274 traverse the membrane as a helical segment; the sequence is MVVIMVVAFLVCWCPYAGVAWY. Residues 275-286 lie on the Extracellular side of the membrane; it reads IFTHQGSEFGPL. Residues 287-308 traverse the membrane as a helical segment; the sequence is FMTFPAFFAKSSSIYNPMIYIC. At K296 the chain carries N6-(retinylidene)lysine. The Cytoplasmic portion of the chain corresponds to 309 to 353; sequence MNKQFRHCMITTLCCGKNPFEEEEGASTTSKTEASSVSSSSVSPA. S-palmitoyl cysteine attachment occurs at residues C322 and C323. Positions 330 to 353 are disordered; sequence EEEGASTTSKTEASSVSSSSVSPA. Positions 334-353 are enriched in low complexity; the sequence is ASTTSKTEASSVSSSSVSPA.

Belongs to the G-protein coupled receptor 1 family. Opsin subfamily. Phosphorylated on some or all of the serine and threonine residues present in the C-terminal region. Post-translationally, contains one covalently linked retinal chromophore.

It is found in the membrane. It localises to the cell projection. The protein resides in the cilium. The protein localises to the photoreceptor outer segment. Photoreceptor required for image-forming vision at low light intensity. While most salt water fish species use retinal as chromophore, most freshwater fish use 3-dehydroretinal, or a mixture of retinal and 3-dehydroretinal. Light-induced isomerization of 11-cis to all-trans retinal triggers a conformational change that activates signaling via G-proteins. Subsequent receptor phosphorylation mediates displacement of the bound G-protein alpha subunit by arrestin and terminates signaling. This is Rhodopsin (rho) from Chelon labrosus (Thicklip grey mullet).